A 207-amino-acid chain; its full sequence is Ribonuclease HII (207 aa).

One can recognise an RNase H type-2 domain in the interval 5 to 207 (PLIIGVDEAG…APVRALLRPC (203 aa)). Positions 11, 12, and 117 each coordinate a divalent metal cation.

This sequence belongs to the RNase HII family. The cofactor is Mn(2+). Requires Mg(2+) as cofactor.

It localises to the cytoplasm. The enzyme catalyses Endonucleolytic cleavage to 5'-phosphomonoester.. Functionally, endonuclease that specifically degrades the RNA of RNA-DNA hybrids. The polypeptide is Ribonuclease HII (Hyphomonas neptunium (strain ATCC 15444)).